The following is a 478-amino-acid chain: Cytochrome c-552 (478 aa).

Residues 1–26 (MARKTLRARRFFSLIFPFFFITSVYA) form the signal peptide. H94 lines the heme c pocket. C122, C125, and K126 together coordinate heme. Heme c is bound by residues C160, C163, H164, C209, C212, and H213. Ca(2+)-binding residues include E215, Y216, K261, and Q263. A substrate-binding site is contributed by Y216. Position 264 (H264) interacts with substrate. The heme c site is built by H275, C282, C285, H286, H301, C314, C317, H318, and H393.

The protein belongs to the cytochrome c-552 family. Ca(2+) is required as a cofactor. Requires heme c as cofactor.

Its subcellular location is the periplasm. The catalysed reaction is 6 Fe(III)-[cytochrome c] + NH4(+) + 2 H2O = 6 Fe(II)-[cytochrome c] + nitrite + 8 H(+). It functions in the pathway nitrogen metabolism; nitrate reduction (assimilation). Its function is as follows. Catalyzes the reduction of nitrite to ammonia, consuming six electrons in the process. The polypeptide is Cytochrome c-552 (Salmonella agona (strain SL483)).